The primary structure comprises 250 residues: tRNA pseudouridine synthase A (250 aa).

The active-site Nucleophile is aspartate 52. A substrate-binding site is contributed by tyrosine 111.

This sequence belongs to the tRNA pseudouridine synthase TruA family. In terms of assembly, homodimer.

The enzyme catalyses uridine(38/39/40) in tRNA = pseudouridine(38/39/40) in tRNA. In terms of biological role, formation of pseudouridine at positions 38, 39 and 40 in the anticodon stem and loop of transfer RNAs. This is tRNA pseudouridine synthase A from Methylorubrum extorquens (strain PA1) (Methylobacterium extorquens).